We begin with the raw amino-acid sequence, 272 residues long: Glucosyl-3-phosphoglycerate/mannosyl-3-phosphoglycerate phosphatase (272 aa).

D8 (nucleophile) is an active-site residue. Residues D8, D10, and D214 each contribute to the Mg(2+) site.

It belongs to the HAD-like hydrolase superfamily. MPGP family. Monomer. Co(2+) serves as cofactor. Requires Mg(2+) as cofactor. Ni(2+) is required as a cofactor.

The enzyme catalyses (2R)-2-O-(alpha-D-glucopyranosyl)-3-phospho-glycerate + H2O = (2R)-2-O-(alpha-D-glucopyranosyl)-glycerate + phosphate. The catalysed reaction is 2-O-(alpha-D-mannosyl)-3-phosphoglycerate + H2O = (2R)-2-O-(alpha-D-mannosyl)-glycerate + phosphate. Its function is as follows. Involved in the biosynthesis of glucosylglycerate. Catalyzes the dephosphorylation of glucosyl-3-phosphoglycerate (GPG) and mannosyl-3-phosphoglycerate (MPG) to glucosylglycerate (GG) and mannosylglycerate (MG), respectively. In Methanococcoides burtonii (strain DSM 6242 / NBRC 107633 / OCM 468 / ACE-M), this protein is Glucosyl-3-phosphoglycerate/mannosyl-3-phosphoglycerate phosphatase.